The following is a 470-amino-acid chain: D-serine/D-alanine/glycine transporter (470 aa).

12 helical membrane-spanning segments follow: residues 30-50 (LIAIGGAIGTGLFMGSGKTIS), 51-71 (LAGPSIIFVYMIIGFMLFFVM), 102-122 (FTGWTYWFCWVVTGMADVVAI), 137-157 (VASLAVIVLLLTLNLATVKMF), 162-182 (FWFAMIKIVAIVSLIVVGLVM), 211-231 (LSGFFAGFQIAVFAFVGIELV), 256-276 (IIMFYVFALIVIMSVTPWSSV), 283-303 (FVELFVLVGLPAAASVINFVV), 350-370 (FSCICLLGGVVMLYVNPSVIG), 371-391 (AFTMITTVSAILFMFVWTIIL), 413-433 (PLGKLMCWVCMAFFVFVVVLL), and 441-461 (QALLVTPLWFIALGLGWLFIG).

The protein belongs to the amino acid-polyamine-organocation (APC) superfamily. Amino acid transporter (AAT) (TC 2.A.3.1) family.

The protein localises to the cell inner membrane. The catalysed reaction is D-alanine(in) + H(+)(in) = D-alanine(out) + H(+)(out). The enzyme catalyses D-serine(out) + H(+)(out) = D-serine(in) + H(+)(in). It carries out the reaction glycine(in) + H(+)(in) = glycine(out) + H(+)(out). Permease that is involved in the transport across the cytoplasmic membrane of D-alanine, D-serine and glycine. The chain is D-serine/D-alanine/glycine transporter (cycA) from Escherichia coli O157:H7.